Reading from the N-terminus, the 346-residue chain is Leucine zipper protein 2 (346 aa).

An N-terminal signal peptide occupies residues 1–19; it reads MKFSPAHYLLPLLPALVLS. Positions 16–211 form a coiled coil; the sequence is LVLSTRQDYE…QMKAMKETVQ (196 aa). Asn-133 carries an N-linked (GlcNAc...) asparagine glycan. The interval 164–192 is leucine-zipper; it reads LRYGKKDLLFKAQQLTDLEQKLAVAKNEL. A disordered region spans residues 225–346; the sequence is ALSLITSNPT…GMAAREEKIL (122 aa). Low complexity predominate over residues 250-261; it reads AAAKSKPQQSAS. Over residues 262–283 the composition is skewed to polar residues; sequence GNNESSQVESTKEGSPSTTACD. An N-linked (GlcNAc...) asparagine glycan is attached at Asn-264. Basic and acidic residues predominate over residues 286–298; the sequence is DEGRTCSIKHKES. The N-linked (GlcNAc...) asparagine glycan is linked to Asn-302.

It is found in the secreted. The chain is Leucine zipper protein 2 (LUZP2) from Pongo abelii (Sumatran orangutan).